A 229-amino-acid chain; its full sequence is MGKKYIESSKLIDKSALYNSTEALDLTVKTAKANFDETIELHVRLGVDPRHADQQVRGAVVLPNGTGKTVRVLVFAKGDKATEAQEAGADFVGAEDLVQKIQSENWFDYDVVVATPDMMGVVGRIGRVLGPKGLMPNPKSGTVTFDVAKAIAEIKAGKVEYRVDKTSIVHCPIGKKSFGTEKLKENFTTLMEALVKAKPAAAKGQYLKSITVSSTMGPGAKINPTKALD.

It belongs to the universal ribosomal protein uL1 family. Part of the 50S ribosomal subunit.

Its function is as follows. Binds directly to 23S rRNA. The L1 stalk is quite mobile in the ribosome, and is involved in E site tRNA release. In terms of biological role, protein L1 is also a translational repressor protein, it controls the translation of the L11 operon by binding to its mRNA. The chain is Large ribosomal subunit protein uL1 from Clostridium botulinum (strain Alaska E43 / Type E3).